Reading from the N-terminus, the 130-residue chain is Histone H2B (130 aa).

The interval 1-31 (MAKSARHVTGKAPSSLDAHDRKKSKKKSSSM) is disordered. A Glycyl lysine isopeptide (Lys-Gly) (interchain with G-Cter in ubiquitin) cross-link involves residue lysine 122.

It belongs to the histone H2B family. The nucleosome is a histone octamer containing two molecules each of H2A, H2B, H3 and H4 assembled in one H3-H4 heterotetramer and two H2A-H2B heterodimers. The octamer wraps approximately 147 bp of DNA. In terms of processing, monoubiquitinated to form H2BK123ub1. H2BK123ub1 gives a specific tag for epigenetic transcriptional activation and is also prerequisite for H3K4me and H3K79me formation.

The protein localises to the nucleus. The protein resides in the chromosome. In terms of biological role, core component of nucleosome. Nucleosomes wrap and compact DNA into chromatin, limiting DNA accessibility to the cellular machineries which require DNA as a template. Histones thereby play a central role in transcription regulation, DNA repair, DNA replication and chromosomal stability. DNA accessibility is regulated via a complex set of post-translational modifications of histones, also called histone code, and nucleosome remodeling. The chain is Histone H2B (HTB1) from Encephalitozoon cuniculi (strain GB-M1) (Microsporidian parasite).